The primary structure comprises 502 residues: Cytochrome P450 monooxygenase verC (502 aa).

Residues 9 to 29 (IAALPMVSLLGAALIVVSVLG) traverse the membrane as a helical segment. N-linked (GlcNAc...) asparagine glycosylation is found at asparagine 124, asparagine 190, asparagine 271, and asparagine 342. Cysteine 444 serves as a coordination point for heme.

It belongs to the cytochrome P450 family. Heme is required as a cofactor.

It is found in the membrane. It functions in the pathway mycotoxin biosynthesis. Cytochrome P450 monooxygenase; part of the gene cluster that mediates the biosynthesis of 11'-deoxyverticillin A, one of the dimeric epipolythiodioxopiperazines (ETPs) from the verticillin family that act as mycotoxins. 11'-deoxyverticillin A is required for normal conidiation. The nonribosomal peptide synthetase verP is speculated to be responsible for condensation of amino acids to form the carbon skeleton of verticillin, whereas the cluster-specific tailoring enzymes are involved in further modifications leading to the production of 11'-deoxyverticillin A. In Clonostachys rogersoniana, this protein is Cytochrome P450 monooxygenase verC.